A 535-amino-acid chain; its full sequence is Major glycerophosphoinositol permease GIT3 (535 aa).

A helical membrane pass occupies residues 49–69; it reads VVTSVKANSLWPAFASGAGLF. N-linked (GlcNAc...) asparagine glycosylation occurs at Asn75. The next 5 helical transmembrane spans lie at 101-121, 137-157, 165-185, 204-224, and 232-252; these read NIAS…GYIS, LIFF…QGFF, FFLG…ASEF, AMID…IWIF, and LWRV…FMRL. N-linked (GlcNAc...) asparagine glycosylation occurs at Asn256. A run of 6 helical transmembrane segments spans residues 275–295, 324–344, 352–372, 378–398, 419–439, and 455–475; these read WWLI…IWFI, WGWS…GAIS, LTLA…SACL, HIAG…FGPG, GIAA…FPAI, and VPFY…IFFC. N-linked (GlcNAc...) asparagine glycosylation occurs at Asn532.

The protein belongs to the major facilitator superfamily. Sugar transporter (TC 2.A.1.1) family.

The protein resides in the cell membrane. The catalysed reaction is sn-glycerol 3-phosphocholine(out) = sn-glycerol 3-phosphocholine(in). Functionally, glycerophosphodiester transporter that mediates uptake of glycerophosphocholine (GroPCho) with GIT4. GIT3 acts as the major GroPCho permease. Does not possess detectable glycerophosphoinositol (GroPIns) transport activity. The expanded ability to utilize GroPIns and GroPCho results from the organism's pathogenic nature and its need to occupy a variety of environments within its host organism. This possibility is buttressed by the fact that GroPIns and GroPCho are present and abundant in human fluids. This Candida albicans (strain SC5314 / ATCC MYA-2876) (Yeast) protein is Major glycerophosphoinositol permease GIT3.